The chain runs to 503 residues: UPF0522 protein C (503 aa).

Residues 1-18 form the signal peptide; it reads MKLFILIILSICLALVNS. Residues asparagine 330, asparagine 337, and asparagine 370 are each glycosylated (N-linked (GlcNAc...) asparagine).

The protein belongs to the UPF0522 family.

The protein resides in the secreted. In Dictyostelium discoideum (Social amoeba), this protein is UPF0522 protein C.